Reading from the N-terminus, the 224-residue chain is tRNA (guanine-N(7)-)-methyltransferase (224 aa).

S-adenosyl-L-methionine contacts are provided by Glu-57, Asp-82, and Asp-109. Residue Asp-167 participates in substrate binding.

Belongs to the class I-like SAM-binding methyltransferase superfamily. TrmB family.

It catalyses the reaction guanosine(46) in tRNA + S-adenosyl-L-methionine = N(7)-methylguanosine(46) in tRNA + S-adenosyl-L-homocysteine. The protein operates within tRNA modification; N(7)-methylguanine-tRNA biosynthesis. Its function is as follows. Catalyzes the formation of N(7)-methylguanine at position 46 (m7G46) in tRNA. The polypeptide is tRNA (guanine-N(7)-)-methyltransferase (Chloroflexus aggregans (strain MD-66 / DSM 9485)).